Consider the following 63-residue polypeptide: MLYWALIFLIVAIVAGLFGFRGVASAATGIAKVLFFLFIVMFIVLLVFSLLGGTPEPVVIVKP.

The next 2 membrane-spanning stretches (helical) occupy residues 4–24 (WALI…RGVA) and 33–53 (VLFF…LLGG).

It belongs to the UPF0391 family.

The protein resides in the cell membrane. The polypeptide is UPF0391 membrane protein lpg2415 (Legionella pneumophila subsp. pneumophila (strain Philadelphia 1 / ATCC 33152 / DSM 7513)).